The primary structure comprises 145 residues: 3-dehydroquinate dehydratase (145 aa).

Residue Y24 is the Proton acceptor of the active site. The substrate site is built by N75, H81, and D88. H101 acts as the Proton donor in catalysis. Substrate contacts are provided by residues 102-103 (IS) and R112.

Belongs to the type-II 3-dehydroquinase family. As to quaternary structure, homododecamer.

It carries out the reaction 3-dehydroquinate = 3-dehydroshikimate + H2O. It participates in metabolic intermediate biosynthesis; chorismate biosynthesis; chorismate from D-erythrose 4-phosphate and phosphoenolpyruvate: step 3/7. In terms of biological role, catalyzes a trans-dehydration via an enolate intermediate. The protein is 3-dehydroquinate dehydratase (aroQ) of Corynebacterium glutamicum (strain ATCC 13032 / DSM 20300 / JCM 1318 / BCRC 11384 / CCUG 27702 / LMG 3730 / NBRC 12168 / NCIMB 10025 / NRRL B-2784 / 534).